The sequence spans 389 residues: tRNA(Met) cytidine acetate ligase (389 aa).

ATP contacts are provided by residues 8–21, Gly-97, Asn-153, and Arg-176; that span reads IAEFNPFHKGHEYL.

This sequence belongs to the TmcAL family.

It is found in the cytoplasm. It carries out the reaction cytidine(34) in elongator tRNA(Met) + acetate + ATP = N(4)-acetylcytidine(34) in elongator tRNA(Met) + AMP + diphosphate. Its function is as follows. Catalyzes the formation of N(4)-acetylcytidine (ac(4)C) at the wobble position of elongator tRNA(Met), using acetate and ATP as substrates. First activates an acetate ion to form acetyladenylate (Ac-AMP) and then transfers the acetyl group to tRNA to form ac(4)C34. In Lactococcus lactis subsp. cremoris (strain SK11), this protein is tRNA(Met) cytidine acetate ligase.